Consider the following 386-residue polypeptide: MQVAAIFIDAEIEDQAQELRKFFKKLGAEISEDKSSKGIEDDLHKIIGVCDVCFKDPSLHTVEEIDAVLNSVVSIIVSIPLERGENLILAFCEKMTKAPDQKLAQVCLQSLWRLFSNLELTSPLRYHVYYHLVQVAKQVDQVKEVFTGVEQLKNQFTQCPPSNEQMQKLYRLLHDVLKDTNSELASKVMIELLGTYTAENASYAREDAMKCIVTALADPNTFLLDPLLSLKPVRFLEGELIHDLLSVFVSEKLPAYLQFYQNHKEFVNSQGLNHEQNIKKMRLLSFMQLAESNPEMTFAQLQDELQIGENDVEPFIIEVLKTKLVRARMDQKARKVHISSTMHRTFGRPQWQQLRDLLHAWKANLTLVQENMKSVAEAQIELTRKQ.

Positions 181 to 343 constitute a PCI domain; the sequence is NSELASKVMI…RKVHISSTMH (163 aa).

This sequence belongs to the eIF-3 subunit M family. In terms of assembly, component of the eukaryotic translation initiation factor 3 (eIF-3) complex.

It localises to the cytoplasm. Functionally, component of the eukaryotic translation initiation factor 3 (eIF-3) complex, which is involved in protein synthesis of a specialized repertoire of mRNAs and, together with other initiation factors, stimulates binding of mRNA and methionyl-tRNAi to the 40S ribosome. The eIF-3 complex specifically targets and initiates translation of a subset of mRNAs involved in cell proliferation. This Culex quinquefasciatus (Southern house mosquito) protein is Eukaryotic translation initiation factor 3 subunit M.